Here is a 156-residue protein sequence, read N- to C-terminus: Ribosomal RNA large subunit methyltransferase H (156 aa).

S-adenosyl-L-methionine contacts are provided by residues leucine 72, glycine 104, and 123-128 (LGKMVW).

This sequence belongs to the RNA methyltransferase RlmH family. As to quaternary structure, homodimer.

Its subcellular location is the cytoplasm. It carries out the reaction pseudouridine(1915) in 23S rRNA + S-adenosyl-L-methionine = N(3)-methylpseudouridine(1915) in 23S rRNA + S-adenosyl-L-homocysteine + H(+). Its function is as follows. Specifically methylates the pseudouridine at position 1915 (m3Psi1915) in 23S rRNA. In Roseobacter denitrificans (strain ATCC 33942 / OCh 114) (Erythrobacter sp. (strain OCh 114)), this protein is Ribosomal RNA large subunit methyltransferase H.